A 714-amino-acid polypeptide reads, in one-letter code: MELENIVANTVYLKAREGGSDSNKGKSKKWRKILQFPHISQCINLKDKLDISYGYVIDQQPIGRELFRLFCENKRPVYFRYITFLDEVVKYEIEYISNRIFIGHDIGRRFLDVEAQLELRNGSGGDALDAETQEELLLNSSNANPTETAETEHCNNTTANNCNNINNSNNSQHSSDINHKKLDTRNHNGDDATGNGSSHQDDGDESVKCQEGHDDAEKGGGGEGGGGGKCVPVGGYPDELVLDVLNDDLIAQVRNKLNSGGKDIFAQCVNAVKAFLAGEPFREFESSMYFHRYLQWKWLEAQPITYKTFRMYRVLGKGGFGEVCACQVRATGKMYACKKLEKKRIKKRKGESMVLIEKQILQKINSPFVVNLAYAYETKDALCLVLTIMNGGDLKFHIYNMGGEPGFELERARFYAAEVACGLQHLHKQGIVYRDCKPENILLDDHGHVRISDLGLAVEIPEGEMVRGRVGTVGYMAPEVIDNEKYAFSPDWFSFGCLLYEMIEGQAPFRMRKEKVKREEVDRRVKEDPEKYSSKFNDEAKSMCQQLLAKSIKQRLGCRNGRMGGQDVMAHPFFHSTQLNWRRLEAGMLEPPFVPDPHAVYAKDVLDIEQFSTVKGVNIDESDTNFYTKFNTGSVSISWQNEMMETECFRELNVFGPEECPTPDLQINAAPEPDKAGCFPFRRKKKQPARTQPIPIPEHLLTTSHSVSSTTVES.

Positions 1–308 (MELENIVANT…LEAQPITYKT (308 aa)) are N-terminal. 2 consecutive RGS domains span residues 53–174 (YGYV…SQHS) and 177–294 (INHK…HRYL). Positions 141 to 229 (SNANPTETAE…GGGEGGGGGK (89 aa)) are disordered. Low complexity predominate over residues 154 to 175 (CNNTTANNCNNINNSNNSQHSS). Basic and acidic residues-rich tracts occupy residues 176-190 (DINHKKLDTRNHNGD) and 199-220 (HQDDGDESVKCQEGHDDAEKGG). The 266-residue stretch at 309 to 574 (FRMYRVLGKG…GQDVMAHPFF (266 aa)) folds into the Protein kinase domain. ATP-binding positions include 315-323 (LGKGGFGEV) and lysine 338. Aspartate 435 serves as the catalytic Proton acceptor. An AGC-kinase C-terminal domain is found at 577 to 642 (TQLNWRRLEA…GSVSISWQNE (66 aa)). Serine 612 is subject to Phosphoserine. The residue at position 613 (threonine 613) is a Phosphothreonine. Residues 667 to 714 (INAAPEPDKAGCFPFRRKKKQPARTQPIPIPEHLLTTSHSVSSTTVES) form a disordered region. Low complexity predominate over residues 698-714 (EHLLTTSHSVSSTTVES).

Belongs to the protein kinase superfamily. AGC Ser/Thr protein kinase family. GPRK subfamily. In terms of tissue distribution, expressed in all larval tissues and in adult ovaries. Larval CNS staining is localized to axons projecting to the optic lobes and the mushroom bodies, in the longitudinal connectives, and in cell bodies and nerves of the ring gland corpus allatum. Adult CNS staining is detectable only in cell bodies and processes associated with the ellipsoid body of the central complex and portions of the mushroom bodies. In the wing disk, expression is confined to a stripe that parallels the anterior/posterior boundary of the wing blade and the hinge region, and weak expression in the prospective notum.

It is found in the membrane. The enzyme catalyses [G-protein-coupled receptor] + ATP = [G-protein-coupled receptor]-phosphate + ADP + H(+). Functionally, specifically phosphorylates the activated forms of G protein-coupled receptors. Required during oogenesis and embryogenesis; component of a signaling pathway that functions during egg chamber maturation. This is G protein-coupled receptor kinase 2 (Gprk2) from Drosophila melanogaster (Fruit fly).